We begin with the raw amino-acid sequence, 237 residues long: tRNA (guanine-N(7)-)-methyltransferase (237 aa).

S-adenosyl-L-methionine-binding residues include Asp-35, Glu-60, Asn-87, and Asp-113. Residue Asp-113 is part of the active site. The substrate site is built by Lys-117 and Asp-149.

Belongs to the class I-like SAM-binding methyltransferase superfamily. TrmB family.

It catalyses the reaction guanosine(46) in tRNA + S-adenosyl-L-methionine = N(7)-methylguanosine(46) in tRNA + S-adenosyl-L-homocysteine. Its pathway is tRNA modification; N(7)-methylguanine-tRNA biosynthesis. Functionally, catalyzes the formation of N(7)-methylguanine at position 46 (m7G46) in tRNA. The protein is tRNA (guanine-N(7)-)-methyltransferase of Synechococcus sp. (strain WH7803).